Here is a 368-residue protein sequence, read N- to C-terminus: Alanine racemase (368 aa).

Lys-40 (proton acceptor; specific for D-alanine) is an active-site residue. N6-(pyridoxal phosphate)lysine is present on Lys-40. A substrate-binding site is contributed by Arg-134. The active-site Proton acceptor; specific for L-alanine is the Tyr-263. Met-310 is a binding site for substrate.

This sequence belongs to the alanine racemase family. It depends on pyridoxal 5'-phosphate as a cofactor.

The catalysed reaction is L-alanine = D-alanine. Its pathway is amino-acid biosynthesis; D-alanine biosynthesis; D-alanine from L-alanine: step 1/1. Catalyzes the interconversion of L-alanine and D-alanine. May also act on other amino acids. The sequence is that of Alanine racemase (alr) from Listeria monocytogenes serotype 4a (strain HCC23).